We begin with the raw amino-acid sequence, 105 residues long: Nitrogenase-stabilizing/protective protein NifW 1 (105 aa).

This sequence belongs to the NifW family. In terms of assembly, homotrimer; associates with NifD.

Its function is as follows. May protect the nitrogenase Fe-Mo protein from oxidative damage. This Trichormus variabilis (strain ATCC 29413 / PCC 7937) (Anabaena variabilis) protein is Nitrogenase-stabilizing/protective protein NifW 1.